We begin with the raw amino-acid sequence, 79 residues long: Putative antitoxin MM_2475 (79 aa).

It belongs to the UPF0330 family.

In terms of biological role, possibly the antitoxin component of a type II toxin-antitoxin (TA) system. In Methanosarcina mazei (strain ATCC BAA-159 / DSM 3647 / Goe1 / Go1 / JCM 11833 / OCM 88) (Methanosarcina frisia), this protein is Putative antitoxin MM_2475.